Here is a 94-residue protein sequence, read N- to C-terminus: Protein translocase subunit SecE (94 aa).

Residues 1 to 32 (MTDAVGSIDMPDAQDEAPDSKKSRKGGKRGKK) form a disordered region. The span at 22–32 (KSRKGGKRGKK) shows a compositional bias: basic residues. The chain crosses the membrane as a helical span at residues 65–85 (TVVIIFVVIMIGLVTLIDYGF).

This sequence belongs to the SecE/SEC61-gamma family. In terms of assembly, component of the Sec protein translocase complex. Heterotrimer consisting of SecY, SecE and SecG subunits. The heterotrimers can form oligomers, although 1 heterotrimer is thought to be able to translocate proteins. Interacts with the ribosome. Interacts with SecDF, and other proteins may be involved. Interacts with SecA.

Its subcellular location is the cell membrane. Functionally, essential subunit of the Sec protein translocation channel SecYEG. Clamps together the 2 halves of SecY. May contact the channel plug during translocation. This chain is Protein translocase subunit SecE, found in Streptomyces coelicolor (strain ATCC BAA-471 / A3(2) / M145).